Reading from the N-terminus, the 482-residue chain is E3 ubiquitin-protein ligase parkin (482 aa).

The Ubiquitin-like domain maps to 30 to 99 (LSIYVKTNTG…LGQQSVLHAI (70 aa)). A Phosphoserine; by Pink1 modification is found at serine 94. The RING-type 0; atypical zinc finger occupies 157–246 (AHFFVHCSQC…SGGEKDFAAP (90 aa)). 4 residues coordinate Zn(2+): cysteine 163, cysteine 166, cysteine 178, and cysteine 181. Threonine 187 carries the post-translational modification Phosphothreonine; by Pink1. Positions 208, 232, 235, 259, 262, 274, 278, 281, 284, 310, 314, 353, 358, 373, 377, 382, 385, 390, 394, 436, and 439 each coordinate Zn(2+). The TRIAD supradomain stretch occupies residues 255 to 482 (KNVPCLACTD…RDCMGAHWFG (228 aa)). Residues 259–314 (CLACTDVSDTVLVFPCASQHVTCIDCFRHYCRSRLGERQFMPHPDFGYTLPCPAGC) form an RING-type 1 zinc finger. 2 IBR-type zinc fingers span residues 334-394 (DRYQ…IGEC) and 432-473 (STKP…EWTR). Residues 436 to 467 (CPKCRTPTERDGGCMHMVCTRAGCGFEWCWVC) form an RING-type 2; atypical zinc finger. Residue cysteine 449 is part of the active site. Residues cysteine 454, cysteine 459, cysteine 464, cysteine 467, cysteine 475, and histidine 479 each coordinate Zn(2+).

It belongs to the RBR family. Parkin subfamily. As to quaternary structure, forms an E3 ubiquitin ligase complex with E2 ubiquitin-conjugating enzymes. Interacts with Pink1. Interacts with Marf. Interacts with Paris. Interacts with septins Septin1 and pnut. Auto-ubiquitinates in an E2-dependent manner leading to its own degradation. In terms of processing, phosphorylated. Activation requires phosphorylation at Ser-94 by Pink1 and binding to Pink1-phosphorylated polyubiquitin chains. Phosphorylation at Thr-187 by Pink1 is also important for mitochondrial localization. In terms of tissue distribution, in oocytes, accumulates in early egg chambers where it is enriched until stages 9-10, localizing mainly to the posterior pole and anterior margin (at protein level). After stage 10 it is no longer detected in the oocyte (at protein level). In embryos, ubiquitously expressed in the early stages (stages 2 to 5) (at protein level). Expression levels decrease at later stages and becomes restricted to the brain and nerve cord from stage 9 (at protein level). Relatively higher levels of expression in the head compared to the body. Enriched in the dorsomedial (DM) dopaminergic neurons.

It is found in the mitochondrion. It localises to the cytoplasm. Its subcellular location is the cytosol. The catalysed reaction is [E2 ubiquitin-conjugating enzyme]-S-ubiquitinyl-L-cysteine + [acceptor protein]-L-lysine = [E2 ubiquitin-conjugating enzyme]-L-cysteine + [acceptor protein]-N(6)-ubiquitinyl-L-lysine.. It functions in the pathway protein modification; protein ubiquitination. In the autoinhibited state the side chain of Phe-481 inserts into a hydrophobic groove in RING-0, occluding the ubiquitin acceptor site Cys-449, whereas the REP repressor element binds RING-1 and blocks its E2-binding site. Activation of park requires 2 steps: (1) phosphorylation at Ser-94 by Pink1 and (2) binding to phosphorylated ubiquitin, leading to unlock repression of the catalytic Cys-449 by the RING-0 region via an allosteric mechanism and converting park to its fully-active form. According to another report, phosphorylation at Ser-94 by Pink1 is not essential for activation and only binding to phosphorylated ubiquitin is essential to unlock repression. Its function is as follows. E3 ubiquitin-protein ligase which accepts ubiquitin from E2 ubiquitin-conjugating enzymes in the form of a thioester and then directly transfers the ubiquitin to targeted substrates, such as Paris, Marf, Opa1, Miro, pnut, Septin1, Tom20 and porin. Mediates monoubiquitination as well as 'Lys-6', 'Lys-11', 'Lys-48'-linked and 'Lys-63'-linked polyubiquitination of substrates, depending on the context. Protects against mitochondrial dysfunction during cellular stress, by acting downstream of Pink1, to coordinate mitochondrial quality control mechanisms that remove and replace dysfunctional mitochondrial components. Depending on the severity of mitochondrial damage and/or dysfunction, activity ranges from preventing apoptosis and stimulating mitochondrial biogenesis to regulating mitochondrial dynamics and eliminating severely damaged mitochondria via mitophagy. Appears to be particularly important in maintaining the physiology and function of cells with high energy demands that are undergoing stress or altered metabolic environment, including spermatids, muscle cells and neurons such as the dopaminergic (DA) neurons. Activation and recruitment onto the outer membrane of damaged/dysfunctional mitochondria (OMM) requires Pink1-mediated phosphorylation of both park and ubiquitin. In depolarized mitochondria, mediates the decision between mitophagy or preventing apoptosis by inducing either the poly- or monoubiquitination of porin/VDAC; polyubiquitination of porin promotes mitophagy, while monoubiquitination of porin decreases mitochondrial calcium influx which ultimately inhibits apoptosis. When cellular stress results in irreversible mitochondrial damage, promotes the autophagic degradation of dysfunctional depolarized mitochondria (mitophagy) by promoting the ubiquitination of mitochondrial proteins. Preferentially assembles 'Lys-6'-, 'Lys-11'- and 'Lys-63'-linked polyubiquitin chains following mitochondrial damage, leading to mitophagy. In developing tissues, inhibits JNK-mediated apoptosis by negatively regulating bsk transcription. The Pink1-park pathway also promotes fission and/or inhibits fusion of damaged mitochondria by mediating the ubiquitination and subsequent degradation of proteins involved in mitochondrial fusion/fission such as Marf, Opa1 and fzo. This prevents the refusion of unhealthy mitochondria with the healthy mitochondrial network and/or initiates mitochondrial fragmentation facilitating their later engulfment by autophagosomes. Regulates motility of damaged mitochondria by phosphorylating Miro which likely promotes its park-dependent degradation by the proteasome; in motor neurons, this inhibits mitochondrial intracellular anterograde transport along the axons which probably increases the chance of the mitochondria being eliminated in the soma. The Pink1-park pathway is also involved in mitochondrial regeneration processes such as promoting mitochondrial biogenesis, activating localized mitochondrial repair, promoting selective turnover of mitochondrial proteins and initiating the mitochondrial import of endogenous proteins. Involved in mitochondrial biogenesis via the ubiquitination of transcriptional repressor Paris which leads to its subsequent proteasomal degradation and allows activation of the transcription factor srl. Promotes localized mitochondrial repair by activating the translation of specific nuclear-encoded mitochondrial RNAs (nc-mtRNAs) on the mitochondrial surface, including several key electron transport chain component nc-mtRNAs. This chain is E3 ubiquitin-protein ligase parkin, found in Drosophila melanogaster (Fruit fly).